A 319-amino-acid polypeptide reads, in one-letter code: MTSIAFCNAFTVNPFLAAARRSPPPLTPLTSVALSPARKPRILAIFHPRTFPSFRVQAIAEDEWESEKKTLKGVVGSVALAEDEKTGADLVVSDLKKKLIDQLFGTDRGLKATSETRAEVNELITQLEAKNPNPAPTEALSLLNGKWILAYTSFVGLFPLLGAESLQQLLKVDEISQTIDSEGFTVQNSVRFVGPFSSTSVTTNAKFEVRSPKRVQIKFEEGIIGTPQLTDSIVIPDKVEFFGQNIDLSPFKGVISSLQDTASSVAKTISSQPPIKFPISNSNAQSWLLTTYLDDELRISRADGGSVFVLILESSPLLT.

A chromoplast-targeting transit peptide spans 1 to 55 (MTSIAFCNAFTVNPFLAAARRSPPPLTPLTSVALSPARKPRILAIFHPRTFPSFR).

This sequence belongs to the PAP/fibrillin family.

The protein resides in the plastid. Its subcellular location is the chromoplast. Functionally, may be involved in carotenoid sequestration within chromoplasts. This Oncidium hybrid cultivar (Orchid) protein is Chromoplast-specific carotenoid-associated protein C2, chromoplastic (CHRC2).